Here is a 358-residue protein sequence, read N- to C-terminus: MHHQWLLLAACFWVIFMFMVASKFITLTFKDPDGYGAKQEPLILTAVTKVEEARVPEEKHWTKEFQPTGKAFTGNLLHHPLVHMERLELLRNVCRDTALRNLSHTAVSKFVLDRIFVCDKHKILFCQTPKVGNTQWKKVLIVLNGAYSSIDEIPESIVHDHEKNGLPRLSSFSDSEIKKRLNLYFKFFIVRDPFERLISAFKDKFVHNPRFEPWYRHEIAPSIIRKYRRNRMETKGLQFEDFVRYLGDPNHRWLDVQFGDHIIHWVTYVELCAPCEITYSVIGHHETLEDDAPYILKAAGIDRLVSYPTIPPGITVYNKTKVERYFSGISKRDIRRLYARFEGDFKLFGYRVPDFLLN.

The Cytoplasmic portion of the chain corresponds to 1–6 (MHHQWL). The chain crosses the membrane as a helical; Signal-anchor for type II membrane protein span at residues 7–27 (LLAACFWVIFMFMVASKFITL). The Lumenal portion of the chain corresponds to 28 to 358 (TFKDPDGYGA…GYRVPDFLLN (331 aa)). Residue Asn101 is glycosylated (N-linked (GlcNAc...) asparagine). Residues 129–135 (PKVGNTQ) and 191–199 (RDPFERLIS) contribute to the 3'-phosphoadenylyl sulfate site. N-linked (GlcNAc...) asparagine glycosylation is present at Asn318.

Belongs to the sulfotransferase 2 family. Predominantly expressed in hypertrophic, prehypertrophic and proliferative chondrocytes at E12 but is down-regulated in epiphyseal chondrocytes.

It is found in the golgi apparatus membrane. Functionally, catalyzes the transfer of sulfate to position 3 of terminal glucuronic acid of both protein- and lipid-linked oligosaccharides. Participates in biosynthesis of HNK-1 carbohydrate structure, a sulfated glucuronyl-lactosaminyl residue carried by many neural recognition molecules, which is involved in cell interactions during ontogenetic development and in synaptic plasticity in the adult. The polypeptide is Carbohydrate sulfotransferase 10 (CHST10) (Gallus gallus (Chicken)).